Reading from the N-terminus, the 321-residue chain is Cytochrome c biogenesis protein CcsA (321 aa).

8 consecutive transmembrane segments (helical) span residues 17-37 (IVSI…IVGL), 43-63 (KGMI…WIYS), 71-91 (LYES…VPKI), 98-118 (LSAI…SGLL), 143-163 (MVLS…LLVI), 225-245 (VISL…VWAN), 258-275 (ETWA…LHTR), and 286-306 (AIVA…VNLL).

This sequence belongs to the CcmF/CycK/Ccl1/NrfE/CcsA family. As to quaternary structure, may interact with Ccs1.

Its subcellular location is the plastid. It is found in the chloroplast thylakoid membrane. Functionally, required during biogenesis of c-type cytochromes (cytochrome c6 and cytochrome f) at the step of heme attachment. In Platanus occidentalis (Sycamore), this protein is Cytochrome c biogenesis protein CcsA.